The following is a 183-amino-acid chain: MINIERVLYIVYSSLLNNIPTYGAIANINGSPINLQAKYSNSTLTLQGDIIIQATTNTLTIEIYIGNYPIDSISLNVALSPGTYTLVYTLTINDSTGIINNAFGYAVTNQLKSVSISTNSTLYTISYTQNMLTFYLEYTSYPTTVSITVTFTLTNGSTVTGSYSNSIQGTTLYGIVIPVTFEV.

This is an uncharacterized protein from Saccharolobus islandicus (Sulfolobus islandicus).